Here is a 203-residue protein sequence, read N- to C-terminus: MEPFDFFNSFKHALAVLKLPSKSMSTTDLKAFGERFAKSHTKFPAAPAMTKSILPNFSTVFLTAFSTCSKLRTSTFAIAKTASLSFANCEIPFAACSVLSWSLPTIAALQPRRTKASVCTRHIVPAPPVTNATLPLNKSGLQEPSVTNLPSKVFAVFIVSMTRTYDLPNSKSVNIRNYELLFKFRFSLIWSLTLIPILFGKLQ.

Residues 89–109 (CEIPFAACSVLSWSLPTIAAL) traverse the membrane as a helical segment.

It is found in the membrane. This is an uncharacterized protein from Saccharomyces cerevisiae (strain ATCC 204508 / S288c) (Baker's yeast).